A 1198-amino-acid chain; its full sequence is Fibronectin type-III domain-containing protein 3A (1198 aa).

Residues 160–221 are disordered; sequence YGDVDAHSTH…PSPINEHNGL (62 aa). The segment covering 163-201 has biased composition (basic and acidic residues); sequence VDAHSTHGRSNFRDERSSKTYERLQKKLKDRQGTQKDKM. The span at 202–214 shows a compositional bias: low complexity; the sequence is SSPPSSPQKCPSP. Phosphoserine is present on residues serine 203, serine 207, and serine 213. Fibronectin type-III domains follow at residues 268 to 369, 373 to 465, 469 to 562, 566 to 660, 664 to 757, 761 to 851, 861 to 950, 951 to 1045, and 1046 to 1151; these read NIVK…TLSC, IPNP…TSGC, MPAS…TCPD, IPVK…TPAV, PCLP…TAPG, QCKP…TPPS, EISD…TKPL, PPDP…TPKS, and VPAA…TEPP. Lysine 384 bears the N6-acetyllysine mark. A helical transmembrane segment spans residues 1177-1197; that stretch reads ILVLFAFFSILIAFIIQYFVI.

It belongs to the FNDC3 family. Expressed in the odontoblast and nerves in the dental pulp. Also expressed in trachea and to a lesser extent in the brain, liver, lung and kidney.

The protein resides in the golgi apparatus membrane. Functionally, mediates spermatid-Sertoli adhesion during spermatogenesis. The protein is Fibronectin type-III domain-containing protein 3A (FNDC3A) of Homo sapiens (Human).